Here is a 380-residue protein sequence, read N- to C-terminus: Cytochrome b (380 aa).

4 helical membrane-spanning segments follow: residues 34–54, 78–99, 114–134, and 179–199; these read FGSLLGICLLTQILTGLLLAT, WLIRNLHANGASFFFICIYLHI, WNTGVILLLALMATAFVGYVL, and FFALHFLLPFMIAGLAFIHLT. The heme b site is built by H84 and H98. Residues H183 and H197 each contribute to the heme b site. H202 lines the a ubiquinone pocket. 4 helical membrane passes run 227 to 247, 289 to 309, 321 to 341, and 348 to 368; these read LKDILGFIIMFLPLTTLALFS, LGGVLALAASVLVLFLTPLLH, LSQLLFWTLVANLLILTWVGS, and FIIIGQLASLTYFTILLLLFP.

The protein belongs to the cytochrome b family. The cytochrome bc1 complex contains 11 subunits: 3 respiratory subunits (MT-CYB, CYC1 and UQCRFS1), 2 core proteins (UQCRC1 and UQCRC2) and 6 low-molecular weight proteins (UQCRH/QCR6, UQCRB/QCR7, UQCRQ/QCR8, UQCR10/QCR9, UQCR11/QCR10 and a cleavage product of UQCRFS1). This cytochrome bc1 complex then forms a dimer. It depends on heme b as a cofactor.

The protein localises to the mitochondrion inner membrane. In terms of biological role, component of the ubiquinol-cytochrome c reductase complex (complex III or cytochrome b-c1 complex) that is part of the mitochondrial respiratory chain. The b-c1 complex mediates electron transfer from ubiquinol to cytochrome c. Contributes to the generation of a proton gradient across the mitochondrial membrane that is then used for ATP synthesis. This chain is Cytochrome b (MT-CYB), found in Uria aalge (Common mure).